The sequence spans 92 residues: Bombyxin A-6 (92 aa).

The first 19 residues, 1–19 (MKILLAIALMLSTVMWVST), serve as a signal peptide directing secretion. Gln20 is subject to Pyrrolidone carboxylic acid. 3 cysteine pairs are disulfide-bonded: Cys29–Cys79, Cys41–Cys92, and Cys78–Cys83. Residues 50–70 (SGAQFASYGSAWLMPYSEGRG) constitute a propeptide, c peptide like.

This sequence belongs to the insulin family. In terms of assembly, heterodimer of a B chain and an A chain linked by two disulfide bonds.

It is found in the secreted. Functionally, brain peptide responsible for activation of prothoracic glands to produce ecdysone in insects. The protein is Bombyxin A-6 (BBXA6) of Bombyx mori (Silk moth).